Here is a 685-residue protein sequence, read N- to C-terminus: Phenoloxidase subunit 1 (685 aa).

Residues His209, His213, and His239 each contribute to the Cu cation site. Glu351 serves as the catalytic Proton acceptor. His366, His370, and His406 together coordinate Cu cation. 2 cysteine pairs are disulfide-bonded: Cys580–Cys622 and Cys582–Cys629.

Heterodimer. Forms a complex with an interleukin 1-like protein as a consequence of a host defense response. Cu(2+) is required as a cofactor. Post-translationally, the N-terminus is blocked. In terms of tissue distribution, synthesized by oenocytoids, a type of hemocyte, and released into the hemolymph plasma.

It is found in the secreted. It carries out the reaction 2 L-dopa + O2 = 2 L-dopaquinone + 2 H2O. The catalysed reaction is L-tyrosine + O2 = L-dopaquinone + H2O. Its activity is regulated as follows. Activated by immulectin and lipopolysaccharide. Functionally, this is a copper-containing oxidase that functions in the formation of pigments such as melanins and other polyphenolic compounds. Catalyzes the rate-limiting conversions of tyrosine to DOPA, DOPA to DOPA-quinone and possibly 5,6 dihydroxyindole to indole-5'6 quinone. Binds to the surface of hemocytes and is involved in hemocyte melanization. The chain is Phenoloxidase subunit 1 from Manduca sexta (Tobacco hawkmoth).